A 443-amino-acid polypeptide reads, in one-letter code: ATP-dependent protease ATPase subunit HslU (443 aa).

ATP-binding positions include I18, 60 to 65 (GVGKTE), D256, E321, and R393.

Belongs to the ClpX chaperone family. HslU subfamily. As to quaternary structure, a double ring-shaped homohexamer of HslV is capped on each side by a ring-shaped HslU homohexamer. The assembly of the HslU/HslV complex is dependent on binding of ATP.

It is found in the cytoplasm. ATPase subunit of a proteasome-like degradation complex; this subunit has chaperone activity. The binding of ATP and its subsequent hydrolysis by HslU are essential for unfolding of protein substrates subsequently hydrolyzed by HslV. HslU recognizes the N-terminal part of its protein substrates and unfolds these before they are guided to HslV for hydrolysis. The sequence is that of ATP-dependent protease ATPase subunit HslU from Shigella dysenteriae serotype 1 (strain Sd197).